The chain runs to 418 residues: Tryptophan synthase beta chain 1 (418 aa).

N6-(pyridoxal phosphate)lysine is present on Lys99.

Belongs to the TrpB family. In terms of assembly, tetramer of two alpha and two beta chains. The cofactor is pyridoxal 5'-phosphate.

The enzyme catalyses (1S,2R)-1-C-(indol-3-yl)glycerol 3-phosphate + L-serine = D-glyceraldehyde 3-phosphate + L-tryptophan + H2O. It participates in amino-acid biosynthesis; L-tryptophan biosynthesis; L-tryptophan from chorismate: step 5/5. Functionally, the beta subunit is responsible for the synthesis of L-tryptophan from indole and L-serine. In Corynebacterium efficiens (strain DSM 44549 / YS-314 / AJ 12310 / JCM 11189 / NBRC 100395), this protein is Tryptophan synthase beta chain 1 (trpB1).